The sequence spans 380 residues: Chaperone protein DnaJ (380 aa).

Residues 5–70 (DFYEVLGVSK…NLRARYDQYG (66 aa)) enclose the J domain. A CR-type zinc finger spans residues 135–213 (GVSKEIKVPS…CHGEGRYQKT (79 aa)). Zn(2+)-binding residues include C148, C151, C165, C168, C187, C190, C201, and C204. CXXCXGXG motif repeat units follow at residues 148 to 155 (CEVCNGSG), 165 to 172 (CPTCHGAG), 187 to 194 (CPHCHGRG), and 201 to 208 (CRKCHGEG).

The protein belongs to the DnaJ family. In terms of assembly, homodimer. Zn(2+) serves as cofactor.

The protein resides in the cytoplasm. Functionally, participates actively in the response to hyperosmotic and heat shock by preventing the aggregation of stress-denatured proteins and by disaggregating proteins, also in an autonomous, DnaK-independent fashion. Unfolded proteins bind initially to DnaJ; upon interaction with the DnaJ-bound protein, DnaK hydrolyzes its bound ATP, resulting in the formation of a stable complex. GrpE releases ADP from DnaK; ATP binding to DnaK triggers the release of the substrate protein, thus completing the reaction cycle. Several rounds of ATP-dependent interactions between DnaJ, DnaK and GrpE are required for fully efficient folding. Also involved, together with DnaK and GrpE, in the DNA replication of plasmids through activation of initiation proteins. The protein is Chaperone protein DnaJ of Aeromonas salmonicida (strain A449).